Reading from the N-terminus, the 155-residue chain is Chromosomal passenger complex protein bir-1 (155 aa).

The stretch at 20-87 (RLMTFKNFEY…KRDEPCEFVR (68 aa)) is one BIR repeat. C57, C60, H76, and C83 together coordinate Zn(2+).

It belongs to the IAP family. In terms of assembly, component of the CPC complex which consists of icp-1; csc-1; bir-1 and air-2. Within the complex, interacts with csc-1, icp-1 and air-2. Interacts with csc-1 in a zinc-dependent-manner; the interaction is direct. As to expression, expressed in oocytes and sperm.

It localises to the chromosome. The protein localises to the cytoplasm. It is found in the cytoskeleton. The protein resides in the spindle. Its subcellular location is the midbody. Functionally, component of the chromosomal passenger complex (CPC), a complex that acts as a key regulator of chromosome segregation and cytokinesis. The CPC complex has essential functions at the centromere in ensuring correct chromosome condensation, alignment and segregation. In the complex, required to direct the Aurora B/air-2 kinase to chromosomes. Also functions in spindle midzone formation and in the formation of polar bodies during oogenesis. Required for the localization of the kinetochore component hcp-1 to chromosomes. Involved in the positive regulation of transcription. Involved in the transcriptional regulation of collagen genes. The polypeptide is Chromosomal passenger complex protein bir-1 (Caenorhabditis elegans).